Here is a 183-residue protein sequence, read N- to C-terminus: Inner membrane protein YgjV (183 aa).

Residues 1–2 (MT) lie on the Periplasmic side of the membrane. A helical membrane pass occupies residues 3–23 (AYWLAQGVGVIAFLIGITTFF). Topologically, residues 24–38 (NRDERRFKKQLSVYS) are cytoplasmic. Residues 39–59 (AVIGVHFFLLGTYPAGASAIL) traverse the membrane as a helical segment. Residues 60 to 71 (NAIRTLITLRTR) lie on the Periplasmic side of the membrane. 2 helical membrane-spanning segments follow: residues 72–92 (SLWV…AKFH) and 93–113 (HPVE…LFCC). Over 114-133 (KGLTMRCVMWFSTCCWVIHN) the chain is Periplasmic. Residues 134 to 154 (FWAGSIGGTMIEGSFLLMNGL) traverse the membrane as a helical segment. The Cytoplasmic segment spans residues 155-183 (NIIRFWRMQKRGIDPFKVEKTPSAVDERG).

It is found in the cell inner membrane. This chain is Inner membrane protein YgjV (ygjV), found in Escherichia coli (strain K12).